The sequence spans 357 residues: N-methyltransferase dtpB (357 aa).

It belongs to the methyltransferase superfamily.

It participates in alkaloid biosynthesis. N-methyltransferase; part of the gene cluster that mediates the biosynthesis of the dimeric diketopiperazine alkaloid ditryptophenaline. The nonribosomal peptide synthase dtpA accepts L-tryptophan and L-phenylalanine as its substrates and forms the phenylalanyl-tryptophanyl cyclic dipeptide product cyclophenylalanyltryptophenyl. The N-methyltransferase dtpB is responsible for the N-methylation of cyclophenylalanyltryptophenyl to yield cyclo-N-methylphenylalanyltryptophenyl. The cytochrome P450 monooxygenase is responsible not only for pyrroloindole ring formation but also for concurrent dimerization of N-methylphenylalanyltryptophanyl diketopiperazine monomers into a homodimeric product. This Aspergillus flavus (strain ATCC 200026 / FGSC A1120 / IAM 13836 / NRRL 3357 / JCM 12722 / SRRC 167) protein is N-methyltransferase dtpB.